A 418-amino-acid polypeptide reads, in one-letter code: L-rhamnose isomerase (418 aa).

H262, D294, and D296 together coordinate Mn(2+).

The protein belongs to the rhamnose isomerase family. Homotetramer. Mn(2+) serves as cofactor.

Its subcellular location is the cytoplasm. It catalyses the reaction L-rhamnopyranose = L-rhamnulose. The protein operates within carbohydrate degradation; L-rhamnose degradation; glycerone phosphate from L-rhamnose: step 1/3. Its function is as follows. Catalyzes the interconversion of L-rhamnose and L-rhamnulose. The chain is L-rhamnose isomerase from Yersinia pseudotuberculosis serotype IB (strain PB1/+).